The chain runs to 186 residues: Threonylcarbamoyl-AMP synthase (186 aa).

One can recognise a YrdC-like domain in the interval 2–186; sequence PNEFELAVAA…ARTGAIIRPS (185 aa).

Belongs to the SUA5 family. TsaC subfamily.

It localises to the cytoplasm. The enzyme catalyses L-threonine + hydrogencarbonate + ATP = L-threonylcarbamoyladenylate + diphosphate + H2O. In terms of biological role, required for the formation of a threonylcarbamoyl group on adenosine at position 37 (t(6)A37) in tRNAs that read codons beginning with adenine. Catalyzes the conversion of L-threonine, HCO(3)(-)/CO(2) and ATP to give threonylcarbamoyl-AMP (TC-AMP) as the acyladenylate intermediate, with the release of diphosphate. This Aeromonas hydrophila subsp. hydrophila (strain ATCC 7966 / DSM 30187 / BCRC 13018 / CCUG 14551 / JCM 1027 / KCTC 2358 / NCIMB 9240 / NCTC 8049) protein is Threonylcarbamoyl-AMP synthase.